Consider the following 514-residue polypeptide: RNA-splicing ligase RtcB homolog (514 aa).

Residues D128, C131, H236, H268, and H362 each coordinate Mn(2+). GMP is bound at residue 235-239; that stretch reads NHYAE. Residues 362 to 363, 411 to 414, S418, 437 to 440, and K513 contribute to the GMP site; these read HN, GGTM, and HGAG. H437 (GMP-histidine intermediate) is an active-site residue.

Belongs to the RtcB family. In terms of assembly, catalytic component of the tRNA-splicing ligase complex. It depends on Mn(2+) as a cofactor.

The enzyme catalyses a 3'-end 3'-phospho-ribonucleotide-RNA + a 5'-end dephospho-ribonucleoside-RNA + GTP = a ribonucleotidyl-ribonucleotide-RNA + GMP + diphosphate. It catalyses the reaction a 3'-end 2',3'-cyclophospho-ribonucleotide-RNA + a 5'-end dephospho-ribonucleoside-RNA + GTP + H2O = a ribonucleotidyl-ribonucleotide-RNA + GMP + diphosphate + H(+). Catalytic subunit of the tRNA-splicing ligase complex that acts by directly joining spliced tRNA halves to mature-sized tRNAs by incorporating the precursor-derived splice junction phosphate into the mature tRNA as a canonical 3',5'-phosphodiester. May act as an RNA ligase with broad substrate specificity, and may function toward other RNAs. The sequence is that of RNA-splicing ligase RtcB homolog from Ostreococcus lucimarinus (strain CCE9901).